The primary structure comprises 426 residues: tRNA modification GTPase MnmE (426 aa).

Residues arginine 20, glutamate 77, and methionine 117 each contribute to the (6S)-5-formyl-5,6,7,8-tetrahydrofolate site. Positions 213 to 350 (GFEVAILGAP…LLTDIEGVLS (138 aa)) constitute a TrmE-type G domain. Residue asparagine 223 coordinates K(+). Residues 223–228 (NAGKST), 242–248 (SDVPGTT), and 267–270 (DTAG) contribute to the GTP site. Serine 227 provides a ligand contact to Mg(2+). The K(+) site is built by serine 242, valine 244, and threonine 247. Threonine 248 lines the Mg(2+) pocket. Lysine 426 contributes to the (6S)-5-formyl-5,6,7,8-tetrahydrofolate binding site.

This sequence belongs to the TRAFAC class TrmE-Era-EngA-EngB-Septin-like GTPase superfamily. TrmE GTPase family. Homodimer. Heterotetramer of two MnmE and two MnmG subunits. K(+) serves as cofactor.

The protein localises to the cytoplasm. Functionally, exhibits a very high intrinsic GTPase hydrolysis rate. Involved in the addition of a carboxymethylaminomethyl (cmnm) group at the wobble position (U34) of certain tRNAs, forming tRNA-cmnm(5)s(2)U34. This Jannaschia sp. (strain CCS1) protein is tRNA modification GTPase MnmE.